The following is a 442-amino-acid chain: D-serine dehydratase (442 aa).

Residue Lys118 is modified to N6-(pyridoxal phosphate)lysine.

This sequence belongs to the serine/threonine dehydratase family. DsdA subfamily. Monomer. Pyridoxal 5'-phosphate is required as a cofactor.

The enzyme catalyses D-serine = pyruvate + NH4(+). The chain is D-serine dehydratase from Citrobacter koseri (strain ATCC BAA-895 / CDC 4225-83 / SGSC4696).